Here is a 198-residue protein sequence, read N- to C-terminus: Small ribosomal subunit protein uS4 (198 aa).

A disordered region spans residues 26 to 45 (LKKRPYAPGQHGQRRSKLSN). Residues 91-154 (SRLDNVVYRL…KNLTIVKEAL (64 aa)) enclose the S4 RNA-binding domain.

The protein belongs to the universal ribosomal protein uS4 family. In terms of assembly, part of the 30S ribosomal subunit. Contacts protein S5. The interaction surface between S4 and S5 is involved in control of translational fidelity.

Functionally, one of the primary rRNA binding proteins, it binds directly to 16S rRNA where it nucleates assembly of the body of the 30S subunit. In terms of biological role, with S5 and S12 plays an important role in translational accuracy. The polypeptide is Small ribosomal subunit protein uS4 (Acholeplasma laidlawii (strain PG-8A)).